A 342-amino-acid chain; its full sequence is Probable tyrosine--tRNA ligase, cytoplasmic (342 aa).

Tyr48 contacts L-tyrosine. The 'HIGH' region motif lies at 53–61 (ITGKPHIGY). Tyr175, Gln179, Asp182, and Gln197 together coordinate L-tyrosine. Residues 231 to 235 (KMSSS) carry the 'KMSKS' region motif.

Belongs to the class-I aminoacyl-tRNA synthetase family. In terms of assembly, homodimer.

The protein localises to the cytoplasm. It catalyses the reaction tRNA(Tyr) + L-tyrosine + ATP = L-tyrosyl-tRNA(Tyr) + AMP + diphosphate + H(+). The protein is Probable tyrosine--tRNA ligase, cytoplasmic of Enterocytozoon bieneusi (strain H348) (Microsporidian parasite).